We begin with the raw amino-acid sequence, 223 residues long: ATP phosphoribosyltransferase (223 aa).

This sequence belongs to the ATP phosphoribosyltransferase family. Short subfamily. Heteromultimer composed of HisG and HisZ subunits.

Its subcellular location is the cytoplasm. It carries out the reaction 1-(5-phospho-beta-D-ribosyl)-ATP + diphosphate = 5-phospho-alpha-D-ribose 1-diphosphate + ATP. It participates in amino-acid biosynthesis; L-histidine biosynthesis; L-histidine from 5-phospho-alpha-D-ribose 1-diphosphate: step 1/9. Functionally, catalyzes the condensation of ATP and 5-phosphoribose 1-diphosphate to form N'-(5'-phosphoribosyl)-ATP (PR-ATP). Has a crucial role in the pathway because the rate of histidine biosynthesis seems to be controlled primarily by regulation of HisG enzymatic activity. This is ATP phosphoribosyltransferase from Halothermothrix orenii (strain H 168 / OCM 544 / DSM 9562).